We begin with the raw amino-acid sequence, 156 residues long: ATP synthase subunit b (156 aa).

The helical transmembrane segment at 1–21 threads the bilayer; the sequence is MSINATLLIQIIAFVLLIWFV.

It belongs to the ATPase B chain family. In terms of assembly, F-type ATPases have 2 components, F(1) - the catalytic core - and F(0) - the membrane proton channel. F(1) has five subunits: alpha(3), beta(3), gamma(1), delta(1), epsilon(1). F(0) has three main subunits: a(1), b(2) and c(10-14). The alpha and beta chains form an alternating ring which encloses part of the gamma chain. F(1) is attached to F(0) by a central stalk formed by the gamma and epsilon chains, while a peripheral stalk is formed by the delta and b chains.

The protein resides in the cell inner membrane. F(1)F(0) ATP synthase produces ATP from ADP in the presence of a proton or sodium gradient. F-type ATPases consist of two structural domains, F(1) containing the extramembraneous catalytic core and F(0) containing the membrane proton channel, linked together by a central stalk and a peripheral stalk. During catalysis, ATP synthesis in the catalytic domain of F(1) is coupled via a rotary mechanism of the central stalk subunits to proton translocation. Its function is as follows. Component of the F(0) channel, it forms part of the peripheral stalk, linking F(1) to F(0). This chain is ATP synthase subunit b, found in Hydrogenovibrio crunogenus (strain DSM 25203 / XCL-2) (Thiomicrospira crunogena).